We begin with the raw amino-acid sequence, 42 residues long: Photosystem I reaction center subunit IX (42 aa).

The chain crosses the membrane as a helical span at residues 7 to 27 (YLSTAPVLATIWFIILAGLLI).

Belongs to the PsaJ family.

The protein localises to the plastid. It is found in the chloroplast thylakoid membrane. May help in the organization of the PsaE and PsaF subunits. The polypeptide is Photosystem I reaction center subunit IX (Mesostigma viride (Green alga)).